Here is a 375-residue protein sequence, read N- to C-terminus: Putative F-box only protein 11 (375 aa).

The F-box domain occupies 1 to 46 (MVSVNLPWELVEEILCRVPPQSLVKFRTVCKQWNSLFDDNKFVNDH).

This Arabidopsis thaliana (Mouse-ear cress) protein is Putative F-box only protein 11 (FBX11).